The following is a 104-amino-acid chain: Large ribosomal subunit protein uL24 (104 aa).

This sequence belongs to the universal ribosomal protein uL24 family. Part of the 50S ribosomal subunit.

Its function is as follows. One of two assembly initiator proteins, it binds directly to the 5'-end of the 23S rRNA, where it nucleates assembly of the 50S subunit. In terms of biological role, one of the proteins that surrounds the polypeptide exit tunnel on the outside of the subunit. The chain is Large ribosomal subunit protein uL24 from Psychromonas ingrahamii (strain DSM 17664 / CCUG 51855 / 37).